We begin with the raw amino-acid sequence, 400 residues long: Na(+)/H(+) antiporter NhaA (400 aa).

Transmembrane regions (helical) follow at residues 10-30 (FNLE…AMII), 60-80 (AHHW…GLEL), 95-115 (IILP…VYLF), 126-146 (GWAI…SLLG), 155-175 (VFLV…IALF), 178-198 (NDLS…LYML), 218-238 (IAVL…ALFI), 265-285 (GILP…AGFG), 295-315 (IAAG…WLIF), 334-354 (AALL…LAFA), and 364-384 (LGII…LKTT).

It belongs to the NhaA Na(+)/H(+) (TC 2.A.33) antiporter family.

It is found in the cell inner membrane. The catalysed reaction is Na(+)(in) + 2 H(+)(out) = Na(+)(out) + 2 H(+)(in). In terms of biological role, na(+)/H(+) antiporter that extrudes sodium in exchange for external protons. The sequence is that of Na(+)/H(+) antiporter NhaA from Psychrobacter arcticus (strain DSM 17307 / VKM B-2377 / 273-4).